Here is a 307-residue protein sequence, read N- to C-terminus: 4-hydroxybenzoate octaprenyltransferase (307 aa).

7 helical membrane-spanning segments follow: residues 27–47, 50–70, 101–121, 142–162, 179–199, 239–259, and 285–305; these read AGWL…AGGF, WHLL…GCCI, LAVG…TNAL, CVAM…PMAF, AAVP…VLAY, LLAW…AAGL, and FRLN…DLGW.

The protein belongs to the UbiA prenyltransferase family. The cofactor is Mg(2+).

It localises to the cell inner membrane. The enzyme catalyses all-trans-octaprenyl diphosphate + 4-hydroxybenzoate = 4-hydroxy-3-(all-trans-octaprenyl)benzoate + diphosphate. It participates in cofactor biosynthesis; ubiquinone biosynthesis. Functionally, catalyzes the prenylation of para-hydroxybenzoate (PHB) with an all-trans polyprenyl group. Mediates the second step in the final reaction sequence of ubiquinone-8 (UQ-8) biosynthesis, which is the condensation of the polyisoprenoid side chain with PHB, generating the first membrane-bound Q intermediate 3-octaprenyl-4-hydroxybenzoate. The chain is 4-hydroxybenzoate octaprenyltransferase from Methylibium petroleiphilum (strain ATCC BAA-1232 / LMG 22953 / PM1).